The following is a 97-amino-acid chain: ATP-dependent Clp protease adapter protein ClpS (97 aa).

Belongs to the ClpS family. In terms of assembly, binds to the N-terminal domain of the chaperone ClpA.

Functionally, involved in the modulation of the specificity of the ClpAP-mediated ATP-dependent protein degradation. This Nostoc sp. (strain PCC 7120 / SAG 25.82 / UTEX 2576) protein is ATP-dependent Clp protease adapter protein ClpS.